A 507-amino-acid polypeptide reads, in one-letter code: Glucose-6-phosphate isomerase (507 aa).

Residue glutamate 338 is the Proton donor of the active site. Catalysis depends on residues histidine 369 and lysine 479.

The protein belongs to the GPI family.

It localises to the cytoplasm. It catalyses the reaction alpha-D-glucose 6-phosphate = beta-D-fructose 6-phosphate. The protein operates within carbohydrate biosynthesis; gluconeogenesis. It functions in the pathway carbohydrate degradation; glycolysis; D-glyceraldehyde 3-phosphate and glycerone phosphate from D-glucose: step 2/4. Provides a gateway for fructose into the Entner-Doudouroff pathway. Functionally, catalyzes the reversible isomerization of glucose-6-phosphate to fructose-6-phosphate. This is Glucose-6-phosphate isomerase from Zymomonas mobilis subsp. mobilis (strain ATCC 31821 / ZM4 / CP4).